The following is a 195-amino-acid chain: Imidazole glycerol phosphate synthase subunit HisH (195 aa).

Positions 1–193 constitute a Glutamine amidotransferase type-1 domain; that stretch reads MIAIVDYGVG…RETTCNSTQQ (193 aa). The Nucleophile role is filled by C78. Residues H168 and E170 contribute to the active site.

Heterodimer of HisH and HisF.

The protein resides in the cytoplasm. It catalyses the reaction 5-[(5-phospho-1-deoxy-D-ribulos-1-ylimino)methylamino]-1-(5-phospho-beta-D-ribosyl)imidazole-4-carboxamide + L-glutamine = D-erythro-1-(imidazol-4-yl)glycerol 3-phosphate + 5-amino-1-(5-phospho-beta-D-ribosyl)imidazole-4-carboxamide + L-glutamate + H(+). The catalysed reaction is L-glutamine + H2O = L-glutamate + NH4(+). It functions in the pathway amino-acid biosynthesis; L-histidine biosynthesis; L-histidine from 5-phospho-alpha-D-ribose 1-diphosphate: step 5/9. IGPS catalyzes the conversion of PRFAR and glutamine to IGP, AICAR and glutamate. The HisH subunit catalyzes the hydrolysis of glutamine to glutamate and ammonia as part of the synthesis of IGP and AICAR. The resulting ammonia molecule is channeled to the active site of HisF. This Exiguobacterium sibiricum (strain DSM 17290 / CCUG 55495 / CIP 109462 / JCM 13490 / 255-15) protein is Imidazole glycerol phosphate synthase subunit HisH.